The primary structure comprises 225 residues: Translation initiation factor 6 (225 aa).

This sequence belongs to the eIF-6 family.

Its function is as follows. Binds to the 50S ribosomal subunit and prevents its association with the 30S ribosomal subunit to form the 70S initiation complex. This chain is Translation initiation factor 6, found in Hyperthermus butylicus (strain DSM 5456 / JCM 9403 / PLM1-5).